The following is an 82-amino-acid chain: UPF0213 protein SH2523 (82 aa).

Positions 2–77 (AKHYVYIVKC…KTFSRQQKLK (76 aa)) constitute a GIY-YIG domain.

The protein belongs to the UPF0213 family.

The polypeptide is UPF0213 protein SH2523 (Staphylococcus haemolyticus (strain JCSC1435)).